A 297-amino-acid polypeptide reads, in one-letter code: 3-methyl-2-oxobutanoate hydroxymethyltransferase (297 aa).

Positions 1–15 are enriched in polar residues; the sequence is MSEQISEQSEQNVYG. The disordered stretch occupies residues 1-40; it reads MSEQISEQSEQNVYGASSPVPAGESSPSAASAPRTKVRTH. Low complexity predominate over residues 16–33; the sequence is ASSPVPAGESSPSAASAP. 2 residues coordinate Mg(2+): Asp78 and Asp117. Residues 78–79, Asp117, and Lys147 contribute to the 3-methyl-2-oxobutanoate site; that span reads DS. Mg(2+) is bound at residue Glu149. The active-site Proton acceptor is Glu215.

This sequence belongs to the PanB family. Homodecamer; pentamer of dimers. Requires Mg(2+) as cofactor.

Its subcellular location is the cytoplasm. It carries out the reaction 3-methyl-2-oxobutanoate + (6R)-5,10-methylene-5,6,7,8-tetrahydrofolate + H2O = 2-dehydropantoate + (6S)-5,6,7,8-tetrahydrofolate. Its pathway is cofactor biosynthesis; (R)-pantothenate biosynthesis; (R)-pantoate from 3-methyl-2-oxobutanoate: step 1/2. Functionally, catalyzes the reversible reaction in which hydroxymethyl group from 5,10-methylenetetrahydrofolate is transferred onto alpha-ketoisovalerate to form ketopantoate. The polypeptide is 3-methyl-2-oxobutanoate hydroxymethyltransferase (Mycobacterium marinum (strain ATCC BAA-535 / M)).